The chain runs to 722 residues: Glycine--tRNA ligase beta subunit (722 aa).

The protein belongs to the class-II aminoacyl-tRNA synthetase family. As to quaternary structure, tetramer of two alpha and two beta subunits.

It is found in the cytoplasm. It carries out the reaction tRNA(Gly) + glycine + ATP = glycyl-tRNA(Gly) + AMP + diphosphate. The protein is Glycine--tRNA ligase beta subunit (glyS) of Xylella fastidiosa (strain 9a5c).